Consider the following 863-residue polypeptide: Glycerol-3-phosphate acyltransferase (863 aa).

The segment at 1–29 is disordered; the sequence is MPKKNSPLLPKETTTTQSSVDTSGSSNLT. The span at 12–29 shows a compositional bias: polar residues; sequence ETTTTQSSVDTSGSSNLT. Residues 343–348 carry the HXXXXD motif motif; it reads SHRSHM.

The protein belongs to the GPAT/DAPAT family.

The protein localises to the cell inner membrane. It carries out the reaction sn-glycerol 3-phosphate + an acyl-CoA = a 1-acyl-sn-glycero-3-phosphate + CoA. It functions in the pathway phospholipid metabolism; CDP-diacylglycerol biosynthesis; CDP-diacylglycerol from sn-glycerol 3-phosphate: step 1/3. This Xylella fastidiosa (strain M23) protein is Glycerol-3-phosphate acyltransferase.